We begin with the raw amino-acid sequence, 237 residues long: Sulfhydrogenase 2 subunit delta (237 aa).

[4Fe-4S] cluster-binding residues include Cys-11, Cys-14, Cys-83, Cys-132, Cys-160, Cys-163, Cys-170, and Cys-179. The [3Fe-4S] cluster site is built by Cys-188, Cys-192, Cys-199, and Cys-202.

The protein belongs to the [NiFe]/[NiFeSe] hydrogenase small subunit family. In terms of assembly, dimer of heterotetramer of alpha, beta, gamma and delta subunits. The nickel-containing alpha and delta subunits constitute the hydrogenase activity. The beta and gamma subunits (flavin-containing dimer) constitute the sulfur reductase activity. Requires Ni(2+) as cofactor. [4Fe-4S] cluster is required as a cofactor. The cofactor is [3Fe-4S] cluster.

Its subcellular location is the cytoplasm. It catalyses the reaction H2 + NADP(+) = NADPH + H(+). The enzyme catalyses H2 + NAD(+) = NADH + H(+). Its function is as follows. Part of a bifunctional enzyme complex that functions as a hydrogen-evolving hydrogenase with sulfur-reducing activity. May play a role in hydrogen cycling during fermentative growth. Activity exhibited with NAD in addition to NADPH. The alpha and delta subunits form the hydrogenase component that catalyzes the reduction of protons to evolve hydrogen. The chain is Sulfhydrogenase 2 subunit delta from Pyrococcus furiosus (strain ATCC 43587 / DSM 3638 / JCM 8422 / Vc1).